The following is a 281-amino-acid chain: Pantothenate synthetase (281 aa).

Residue 30-37 (MGYYHAGH) coordinates ATP. His-37 (proton donor) is an active-site residue. Residue Gln-61 participates in (R)-pantoate binding. Residue Gln-61 participates in beta-alanine binding. Residue 147 to 150 (GEKD) participates in ATP binding. Gln-153 serves as a coordination point for (R)-pantoate. ATP-binding positions include Val-176 and 184-187 (MSSR).

Belongs to the pantothenate synthetase family. In terms of assembly, homodimer.

The protein resides in the cytoplasm. It catalyses the reaction (R)-pantoate + beta-alanine + ATP = (R)-pantothenate + AMP + diphosphate + H(+). It functions in the pathway cofactor biosynthesis; (R)-pantothenate biosynthesis; (R)-pantothenate from (R)-pantoate and beta-alanine: step 1/1. Catalyzes the condensation of pantoate with beta-alanine in an ATP-dependent reaction via a pantoyl-adenylate intermediate. This chain is Pantothenate synthetase, found in Oleidesulfovibrio alaskensis (strain ATCC BAA-1058 / DSM 17464 / G20) (Desulfovibrio alaskensis).